We begin with the raw amino-acid sequence, 550 residues long: Efflux pump DEP3 (550 aa).

The disordered stretch occupies residues 1–33; the sequence is MSEQSTLAGPYTEKPGVESQNPTGDGKASFDET. 11 consecutive transmembrane segments (helical) span residues 44–64, 78–98, 109–129, 139–159, 172–192, 199–219, 242–262, 268–288, 319–339, 351–371, and 373–393; these read AIAYAAMLSTTFLFALDNTIV, LELISWIGTGFALGTMFILLW, WVYIFNILLFEVGSAVCGAAP, VIAGIGGSGMYSGTLTYVSVL, STVVWGVGSVVGPVVGGAFAA, WGFYINLPIGAVFAPAYMILF, AVIFLAGSACLTVALTFGGVV, GTIIALWTVTGVLLVAFIVLL, FLASGIILAMTYYVPLYFQFI, LLPLIMFMVAFSMVNGFLMPK, and GLIPIWYIVGSALTLIGSALM. Residue Asn-399 is glycosylated (N-linked (GlcNAc...) asparagine). Helical transmembrane passes span 410–430, 439–459, and 515–535; these read ILVGAGAGCYIVAGFAIVQSL, AVGAMTISQDLGMVLFLAICG, and SIWAFFMAAAALSFVCSWPLF.

This sequence belongs to the major facilitator superfamily. TCR/Tet family.

Its subcellular location is the cell membrane. In terms of biological role, efflux pump; part of the gene cluster that mediates the biosynthesis of depudecin, a highly oxidized eleven-carbon linear polyketide that acts as a histone deacetylase (HDAC) inhibitor and makes a small contribution to pathogenesis. Is presumed either to be responsible for exporting depudecin, to provide self-protection, or both. This is Efflux pump DEP3 from Fusarium langsethiae.